A 707-amino-acid chain; its full sequence is DNA topoisomerase 1 (707 aa).

In terms of domain architecture, Toprim spans 1–140; sequence MYAILAEKPS…IKRLWTSSMT (140 aa). Residues 157-596 form the Topo IA-type catalytic domain; it reads TLPLYYQAKA…HSKKLSSVLF (440 aa). Residues 199–204 form an interaction with DNA region; it reads SLGRVQ. Tyr-323 functions as the O-(5'-phospho-DNA)-tyrosine intermediate in the catalytic mechanism.

This sequence belongs to the type IA topoisomerase family. As to quaternary structure, monomer.

It catalyses the reaction ATP-independent breakage of single-stranded DNA, followed by passage and rejoining.. Its function is as follows. Releases the supercoiling and torsional tension of DNA, which is introduced during the DNA replication and transcription, by transiently cleaving and rejoining one strand of the DNA duplex. Introduces a single-strand break via transesterification at a target site in duplex DNA. The scissile phosphodiester is attacked by the catalytic tyrosine of the enzyme, resulting in the formation of a DNA-(5'-phosphotyrosyl)-enzyme intermediate and the expulsion of a 3'-OH DNA strand. The free DNA strand then undergoes passage around the unbroken strand, thus removing DNA supercoils. Finally, in the religation step, the DNA 3'-OH attacks the covalent intermediate to expel the active-site tyrosine and restore the DNA phosphodiester backbone. The chain is DNA topoisomerase 1 (topA) from Alkalihalophilus pseudofirmus (strain ATCC BAA-2126 / JCM 17055 / OF4) (Bacillus pseudofirmus).